The sequence spans 721 residues: DNA ligase (721 aa).

A compositionally biased stretch (low complexity) spans 1-19; that stretch reads MTAKKQGAQASASAPSGDS. The tract at residues 1–23 is disordered; it reads MTAKKQGAQASASAPSGDSPAER. NAD(+)-binding positions include 48-52, 97-98, and glutamate 162; these read DADYD and SL. The active-site N6-AMP-lysine intermediate is lysine 164. Residues arginine 185, glutamate 221, lysine 338, and lysine 362 each coordinate NAD(+). Residues cysteine 456, cysteine 459, cysteine 474, and cysteine 480 each coordinate Zn(2+). The 83-residue stretch at 639–721 folds into the BRCT domain; the sequence is RAPLPLAGKT…LKLLAEVGAA (83 aa).

It belongs to the NAD-dependent DNA ligase family. LigA subfamily. The cofactor is Mg(2+). Requires Mn(2+) as cofactor.

The catalysed reaction is NAD(+) + (deoxyribonucleotide)n-3'-hydroxyl + 5'-phospho-(deoxyribonucleotide)m = (deoxyribonucleotide)n+m + AMP + beta-nicotinamide D-nucleotide.. DNA ligase that catalyzes the formation of phosphodiester linkages between 5'-phosphoryl and 3'-hydroxyl groups in double-stranded DNA using NAD as a coenzyme and as the energy source for the reaction. It is essential for DNA replication and repair of damaged DNA. The protein is DNA ligase of Cupriavidus metallidurans (strain ATCC 43123 / DSM 2839 / NBRC 102507 / CH34) (Ralstonia metallidurans).